The sequence spans 342 residues: Dual-specificity RNA methyltransferase RlmN (342 aa).

Glutamate 92 (proton acceptor) is an active-site residue. One can recognise a Radical SAM core domain in the interval 98–329 (DLPRSTLCVS…THVRRSRGGE (232 aa)). Cysteine 105 and cysteine 334 are joined by a disulfide. 3 residues coordinate [4Fe-4S] cluster: cysteine 112, cysteine 116, and cysteine 119. S-adenosyl-L-methionine is bound by residues 161 to 162 (GE), serine 193, 215 to 217 (SLH), and asparagine 291. The S-methylcysteine intermediate role is filled by cysteine 334.

Belongs to the radical SAM superfamily. RlmN family. [4Fe-4S] cluster is required as a cofactor.

It localises to the cytoplasm. The enzyme catalyses adenosine(2503) in 23S rRNA + 2 reduced [2Fe-2S]-[ferredoxin] + 2 S-adenosyl-L-methionine = 2-methyladenosine(2503) in 23S rRNA + 5'-deoxyadenosine + L-methionine + 2 oxidized [2Fe-2S]-[ferredoxin] + S-adenosyl-L-homocysteine. It catalyses the reaction adenosine(37) in tRNA + 2 reduced [2Fe-2S]-[ferredoxin] + 2 S-adenosyl-L-methionine = 2-methyladenosine(37) in tRNA + 5'-deoxyadenosine + L-methionine + 2 oxidized [2Fe-2S]-[ferredoxin] + S-adenosyl-L-homocysteine. In terms of biological role, specifically methylates position 2 of adenine 2503 in 23S rRNA and position 2 of adenine 37 in tRNAs. m2A2503 modification seems to play a crucial role in the proofreading step occurring at the peptidyl transferase center and thus would serve to optimize ribosomal fidelity. This is Dual-specificity RNA methyltransferase RlmN from Syntrophobacter fumaroxidans (strain DSM 10017 / MPOB).